The following is an 874-amino-acid chain: Alanine--tRNA ligase (874 aa).

Positions 562, 566, 664, and 668 each coordinate Zn(2+).

Belongs to the class-II aminoacyl-tRNA synthetase family. Zn(2+) serves as cofactor.

It localises to the cytoplasm. It carries out the reaction tRNA(Ala) + L-alanine + ATP = L-alanyl-tRNA(Ala) + AMP + diphosphate. Functionally, catalyzes the attachment of alanine to tRNA(Ala) in a two-step reaction: alanine is first activated by ATP to form Ala-AMP and then transferred to the acceptor end of tRNA(Ala). Also edits incorrectly charged Ser-tRNA(Ala) and Gly-tRNA(Ala) via its editing domain. The protein is Alanine--tRNA ligase of Shewanella woodyi (strain ATCC 51908 / MS32).